A 128-amino-acid chain; its full sequence is Small ribosomal subunit protein uS11 (128 aa).

The protein belongs to the universal ribosomal protein uS11 family. Part of the 30S ribosomal subunit. Interacts with proteins S7 and S18. Binds to IF-3.

Located on the platform of the 30S subunit, it bridges several disparate RNA helices of the 16S rRNA. Forms part of the Shine-Dalgarno cleft in the 70S ribosome. The chain is Small ribosomal subunit protein uS11 from Desulfatibacillum aliphaticivorans.